The sequence spans 319 residues: Annexin D4 (319 aa).

Annexin repeat units follow at residues methionine 1–arginine 75 and histidine 86–serine 157. Positions 19, 21, and 72 each coordinate Ca(2+). A Phosphothreonine modification is found at threonine 115. Residues tyrosine 159 and tyrosine 211 each carry the phosphotyrosine modification. Annexin repeat units lie at residues aspartate 169 to leucine 240 and lysine 241 to serine 316. Residue serine 277 is modified to Phosphoserine. A Phosphotyrosine modification is found at tyrosine 287.

The protein belongs to the annexin (TC 1.A.31.1) family. Expressed mainly in roots and flowers. Lower in stems and leaves.

May be involved in osmotic stress and abscisic acid signaling in a calcium-dependent manner. In Arabidopsis thaliana (Mouse-ear cress), this protein is Annexin D4 (ANN4).